The sequence spans 135 residues: UPF0299 membrane protein Spro_1570 (135 aa).

The next 4 membrane-spanning stretches (helical) occupy residues 4–24, 30–50, 63–83, and 93–113; these read LFTLCWKYLRAIVLIYLCLFA, ALLPIAIPGSIIGMLLLFALL, GCHLLIRYMVLLFVPIGVGVM, and LGPLVVSCIISTLMVLVVVGY.

This sequence belongs to the UPF0299 family.

Its subcellular location is the cell inner membrane. This is UPF0299 membrane protein Spro_1570 from Serratia proteamaculans (strain 568).